A 199-amino-acid polypeptide reads, in one-letter code: Ribonuclease P protein subunit p25 (199 aa).

The span at Met-1–Glu-11 shows a compositional bias: basic and acidic residues. 2 disordered regions span residues Met-1 to Phe-28 and Leu-144 to Ala-199. Pro residues predominate over residues Tyr-151–Ala-166. Residues Ser-172 and Ser-182 each carry the phosphoserine modification.

It belongs to the histone-like Alba family. Component of nuclear RNase P and RNase MRP ribonucleoproteins. RNase P consists of a catalytic RNA moiety and 10 different protein chains; POP1, POP4, POP5, POP7, RPP14, RPP21, RPP25, RPP30, RPP38 and RPP40. Within the RNase P complex, POP1, POP7 and RPP25 form the 'finger' subcomplex, POP5, RPP14, RPP40 and homodimeric RPP30 form the 'palm' subcomplex, and RPP21, POP4 and RPP38 form the 'wrist' subcomplex. All subunits of the RNase P complex interact with the catalytic RNA. Several subunits of RNase P are also part of the RNase MRP complex. RNase MRP consists of a catalytic RNA moiety and about 8 protein subunits; POP1, POP7, RPP25, RPP30, RPP38, RPP40 and possibly also POP4 and POP5. POP7 forms a heterodimer with RPP25 that binds to the P3 stem loop of the catalytic RNA.

It localises to the nucleus. It is found in the nucleolus. Its function is as follows. Component of ribonuclease P, a ribonucleoprotein complex that generates mature tRNA molecules by cleaving their 5'-ends. Also a component of the MRP ribonuclease complex, which cleaves pre-rRNA sequences. This is Ribonuclease P protein subunit p25 (RPP25) from Homo sapiens (Human).